An 81-amino-acid polypeptide reads, in one-letter code: Large ribosomal subunit protein bL31B (81 aa).

The protein belongs to the bacterial ribosomal protein bL31 family. Type B subfamily. In terms of assembly, part of the 50S ribosomal subunit.

The protein is Large ribosomal subunit protein bL31B of Bacillus anthracis (strain A0248).